Reading from the N-terminus, the 124-residue chain is Thioredoxin domain-containing protein C21C3.12c (124 aa).

Residues 37–124 (PWCPTVRAAL…ANKFSKFIDI (88 aa)) enclose the Thioredoxin domain. The active-site Nucleophile is the Cys-39.

It belongs to the thioredoxin family.

The protein localises to the cytoplasm. It localises to the nucleus. This Schizosaccharomyces pombe (strain 972 / ATCC 24843) (Fission yeast) protein is Thioredoxin domain-containing protein C21C3.12c.